The sequence spans 129 residues: Small ribosomal subunit protein uS11 (129 aa).

The protein belongs to the universal ribosomal protein uS11 family. In terms of assembly, part of the 30S ribosomal subunit. Interacts with proteins S7 and S18. Binds to IF-3.

In terms of biological role, located on the platform of the 30S subunit, it bridges several disparate RNA helices of the 16S rRNA. Forms part of the Shine-Dalgarno cleft in the 70S ribosome. In Bartonella quintana (strain Toulouse) (Rochalimaea quintana), this protein is Small ribosomal subunit protein uS11.